The following is a 137-amino-acid chain: Protein BNS1 (137 aa).

Component of the FEAR (CDC14 early anaphase release) network which promotes CDC14 release from the nucleolus during early anaphase and is required for the efficient segregation of telomeric and nucleolar regions. Although BNS1 can partially compensate for a lack of SPO12 function when overexpressed, it does not appear to play any role in controlling meiotic nuclear division. This chain is Protein BNS1 (BNS1), found in Saccharomyces cerevisiae (strain ATCC 204508 / S288c) (Baker's yeast).